The following is a 282-amino-acid chain: Major surface antigen 4 (282 aa).

A signal peptide spans Met-1–Ala-29.

This sequence belongs to the surface antigen msp4 family.

The protein is Major surface antigen 4 (msp4) of Anaplasma marginale.